We begin with the raw amino-acid sequence, 188 residues long: Adenine phosphoribosyltransferase (188 aa).

It belongs to the purine/pyrimidine phosphoribosyltransferase family. As to quaternary structure, homodimer.

The protein resides in the cytoplasm. It catalyses the reaction AMP + diphosphate = 5-phospho-alpha-D-ribose 1-diphosphate + adenine. The protein operates within purine metabolism; AMP biosynthesis via salvage pathway; AMP from adenine: step 1/1. Functionally, catalyzes a salvage reaction resulting in the formation of AMP, that is energically less costly than de novo synthesis. The protein is Adenine phosphoribosyltransferase of Burkholderia orbicola (strain MC0-3).